The sequence spans 222 residues: MLKSRVILAMDKPLSYQVLKEMENELYGIKVGLPLVLDLGVDKTRELLIGLDVEEIIVDFKLADIGYIMKSIVERLSFANSFIAHSFIGVKGSLDELKRYLDANSKNLYLVAVMSHEGWSTLFADYIKNVIREISPKGIVVGGTKLDHITQYRRDFEKMTIVSPGMGSQGGSYGDAVCAGADYEIIGRSIYNAGNPLTALRTINKIIEDKVMKCKGAIFRKK.

Substrate contacts are provided by residues Asp11, Lys30, 59–68, Ser115, 164–174, Gly187, and Arg188; these read DFKLADIGYI and PGMGSQGGSYG. Catalysis depends on Lys61, which acts as the Proton donor.

This sequence belongs to the OMP decarboxylase family. Type 1 subfamily. Homodimer.

It catalyses the reaction orotidine 5'-phosphate + H(+) = UMP + CO2. It participates in pyrimidine metabolism; UMP biosynthesis via de novo pathway; UMP from orotate: step 2/2. Catalyzes the decarboxylation of orotidine 5'-monophosphate (OMP) to uridine 5'-monophosphate (UMP). The sequence is that of Orotidine 5'-phosphate decarboxylase from Saccharolobus solfataricus (strain ATCC 35092 / DSM 1617 / JCM 11322 / P2) (Sulfolobus solfataricus).